Consider the following 364-residue polypeptide: Protein-glutamate methylesterase/protein-glutamine glutaminase (364 aa).

Positions 5–123 (RVLVVDDTIL…PAANKAALAN (119 aa)) constitute a Response regulatory domain. The residue at position 56 (aspartate 56) is a 4-aspartylphosphate. The 191-residue stretch at 174–364 (EIVVIGISTG…QEIVHTVKLY (191 aa)) folds into the CheB-type methylesterase domain. Residues serine 181, histidine 208, and aspartate 306 contribute to the active site.

This sequence belongs to the CheB family. Phosphorylated by CheA. Phosphorylation of the N-terminal regulatory domain activates the methylesterase activity.

The protein localises to the cytoplasm. It carries out the reaction [protein]-L-glutamate 5-O-methyl ester + H2O = L-glutamyl-[protein] + methanol + H(+). The catalysed reaction is L-glutaminyl-[protein] + H2O = L-glutamyl-[protein] + NH4(+). Its function is as follows. Involved in chemotaxis. Part of a chemotaxis signal transduction system that modulates chemotaxis in response to various stimuli. Catalyzes the demethylation of specific methylglutamate residues introduced into the chemoreceptors (methyl-accepting chemotaxis proteins or MCP) by CheR. Also mediates the irreversible deamidation of specific glutamine residues to glutamic acid. The polypeptide is Protein-glutamate methylesterase/protein-glutamine glutaminase (Desulfotalea psychrophila (strain LSv54 / DSM 12343)).